Reading from the N-terminus, the 840-residue chain is MLTDILKKIFGSQNERILKRIAPLVDEINSYEPVMRKLSDAALKAKTPEFKQRIANGEPLDDLLPEAFAVAREGAVRTLGMRPFDVQMIGGIVLHEGMIAEMKTGEGKTLVAVMPIYLNALTGRGVHLVTVNDYLARRDSEWMGQVYKFLGLSVGCIVHGLDDPERKEAYGADVTYGTNNEYGFDYLRDNMKFRIEDMVQRELNYAIVDEVDSILIDEARTPLIISGPAEKSTALYYNINRIIPQLKPETHYTKEEKSRTVALTEDGVTRTEKLLGVDNLYDPRQIDILHHVQQALRAHVLFKRDVDYIVKDGKVIIVDEFTGRLMPGRRYSEGLHQALEAKENVHIENENQTLASITFQNYFRMFDKLAGMTGTAETEAAEFAKIYKLEVVVIPTHRKMIREDYADCIYRTEAEKFRAVAEEIKEAYAVKRPVLVGTVNIAKSEKLSGILKRQGVPHQVLNAKHHEKEAEIVALAGQPGAVTISTNMAGRGTDIVLGPGVVDVGGLHIIGTERHEARRIDNQLRGRSGRQGDPGSSRFYLSLEDDLMRIFAADRLSGLMQRIGMKEDEPIEHRLITKAIENAQSKVEAQNFSIRKQLLEYDDVMNQQREVIYRQRREALQGENLKPVVLDMIEDLLEGILAETADEKHYAEDWDLEKINSEVLRLFGLQMNLTVESLGDIEYEEFRDSLLERLTKRYEAREQEFGESMMRELESYLLLQTVDTYWKDHLLNMDHLKEGIGLRGYGQQDPLIAYKREGHALFDEMIERIKEETIRLLFHIQIQREEQLDELRKEQEDQPMFFGPAEGAGQKPQTRKDRKVGRNDPCPCGSGKKYKKCCGK.

Residues Q87, 105 to 109, and D494 contribute to the ATP site; that span reads GEGKT. The segment at 791-840 is disordered; sequence LRKEQEDQPMFFGPAEGAGQKPQTRKDRKVGRNDPCPCGSGKKYKKCCGK. Zn(2+)-binding residues include C826, C828, C837, and C838.

This sequence belongs to the SecA family. Monomer and homodimer. Part of the essential Sec protein translocation apparatus which comprises SecA, SecYEG and auxiliary proteins SecDF-YajC and YidC. Zn(2+) is required as a cofactor.

The protein resides in the cell inner membrane. It is found in the cytoplasm. It carries out the reaction ATP + H2O + cellular proteinSide 1 = ADP + phosphate + cellular proteinSide 2.. Part of the Sec protein translocase complex. Interacts with the SecYEG preprotein conducting channel. Has a central role in coupling the hydrolysis of ATP to the transfer of proteins into and across the cell membrane, serving as an ATP-driven molecular motor driving the stepwise translocation of polypeptide chains across the membrane. This chain is Protein translocase subunit SecA, found in Syntrophobacter fumaroxidans (strain DSM 10017 / MPOB).